The chain runs to 311 residues: Pyrimidine-specific ribonucleoside hydrolase RihA (311 aa).

The active site involves His240.

The protein belongs to the IUNH family. RihA subfamily.

Hydrolyzes cytidine or uridine to ribose and cytosine or uracil, respectively. In Shigella flexneri serotype 5b (strain 8401), this protein is Pyrimidine-specific ribonucleoside hydrolase RihA.